Here is a 224-residue protein sequence, read N- to C-terminus: Ribonuclease HII (224 aa).

In terms of domain architecture, RNase H type-2 spans 1–210 (MKVAGADEAG…AKKIEEKFKR (210 aa)). A divalent metal cation contacts are provided by D7, E8, and D105.

Belongs to the RNase HII family. Mn(2+) serves as cofactor. It depends on Mg(2+) as a cofactor.

It localises to the cytoplasm. It catalyses the reaction Endonucleolytic cleavage to 5'-phosphomonoester.. In terms of biological role, endonuclease that specifically degrades the RNA of RNA-DNA hybrids. The protein is Ribonuclease HII (rnhB) of Pyrococcus abyssi (strain GE5 / Orsay).